The following is a 244-amino-acid chain: Phosphoadenosine 5'-phosphosulfate reductase (244 aa).

Cysteine 239 functions as the Nucleophile; cysteine thiosulfonate intermediate in the catalytic mechanism.

It belongs to the PAPS reductase family. CysH subfamily.

Its subcellular location is the cytoplasm. It carries out the reaction [thioredoxin]-disulfide + sulfite + adenosine 3',5'-bisphosphate + 2 H(+) = [thioredoxin]-dithiol + 3'-phosphoadenylyl sulfate. The protein operates within sulfur metabolism; hydrogen sulfide biosynthesis; sulfite from sulfate: step 3/3. Its function is as follows. Catalyzes the formation of sulfite from phosphoadenosine 5'-phosphosulfate (PAPS) using thioredoxin as an electron donor. This chain is Phosphoadenosine 5'-phosphosulfate reductase, found in Citrobacter koseri (strain ATCC BAA-895 / CDC 4225-83 / SGSC4696).